Consider the following 164-residue polypeptide: FMN reductase (NADH) RutF (164 aa).

Belongs to the non-flavoprotein flavin reductase family. RutF subfamily.

It carries out the reaction FMNH2 + NAD(+) = FMN + NADH + 2 H(+). Its function is as follows. Catalyzes the reduction of FMN to FMNH2 which is used to reduce pyrimidine by RutA via the Rut pathway. This is FMN reductase (NADH) RutF from Escherichia coli O6:K15:H31 (strain 536 / UPEC).